The sequence spans 66 residues: MKQGIHPEYKKVIVRCACGNEFESGSVKDELRVEICSECHPFFTGKQKFVTAAGRVDKFNKKYGLK.

Positions 16, 18, 36, and 39 each coordinate Zn(2+).

The protein belongs to the bacterial ribosomal protein bL31 family. Type A subfamily. As to quaternary structure, part of the 50S ribosomal subunit. Requires Zn(2+) as cofactor.

Binds the 23S rRNA. The chain is Large ribosomal subunit protein bL31 from Geobacillus kaustophilus (strain HTA426).